Reading from the N-terminus, the 120-residue chain is NAD(P)H-quinone oxidoreductase subunit 3, chloroplastic (120 aa).

Helical transmembrane passes span 9-29 (IFWTFLIIASLIPILVFWISG), 64-84 (MFALVFVVFDVETVFLYPWAM), and 88-108 (VLGVSVFIEAFIFVLILVVGL).

Belongs to the complex I subunit 3 family. NDH is composed of at least 16 different subunits, 5 of which are encoded in the nucleus.

It is found in the plastid. Its subcellular location is the chloroplast thylakoid membrane. It catalyses the reaction a plastoquinone + NADH + (n+1) H(+)(in) = a plastoquinol + NAD(+) + n H(+)(out). It carries out the reaction a plastoquinone + NADPH + (n+1) H(+)(in) = a plastoquinol + NADP(+) + n H(+)(out). In terms of biological role, NDH shuttles electrons from NAD(P)H:plastoquinone, via FMN and iron-sulfur (Fe-S) centers, to quinones in the photosynthetic chain and possibly in a chloroplast respiratory chain. The immediate electron acceptor for the enzyme in this species is believed to be plastoquinone. Couples the redox reaction to proton translocation, and thus conserves the redox energy in a proton gradient. This Zea mays (Maize) protein is NAD(P)H-quinone oxidoreductase subunit 3, chloroplastic.